The following is a 225-amino-acid chain: Thymidylate kinase (225 aa).

Residue Gly-9 to Thr-16 coordinates ATP.

Belongs to the thymidylate kinase family.

The enzyme catalyses dTMP + ATP = dTDP + ADP. Its function is as follows. Phosphorylation of dTMP to form dTDP in both de novo and salvage pathways of dTTP synthesis. The polypeptide is Thymidylate kinase (Citrifermentans bemidjiense (strain ATCC BAA-1014 / DSM 16622 / JCM 12645 / Bem) (Geobacter bemidjiensis)).